We begin with the raw amino-acid sequence, 295 residues long: Pantothenate synthetase (295 aa).

Histidine 37 functions as the Proton donor in the catalytic mechanism. Glutamine 61 is a binding site for (R)-pantoate. Glutamine 61 is a binding site for beta-alanine. 154 to 157 (GRKD) is an ATP binding site. Residue glutamine 160 coordinates (R)-pantoate. ATP-binding positions include valine 183 and 191 to 194 (QSSR).

Belongs to the pantothenate synthetase family. Homodimer.

It localises to the cytoplasm. It carries out the reaction (R)-pantoate + beta-alanine + ATP = (R)-pantothenate + AMP + diphosphate + H(+). The protein operates within cofactor biosynthesis; (R)-pantothenate biosynthesis; (R)-pantothenate from (R)-pantoate and beta-alanine: step 1/1. Its function is as follows. Catalyzes the condensation of pantoate with beta-alanine in an ATP-dependent reaction via a pantoyl-adenylate intermediate. The sequence is that of Pantothenate synthetase from Salinibacter ruber (strain DSM 13855 / M31).